The primary structure comprises 239 residues: 1-(5-phosphoribosyl)-5-[(5-phosphoribosylamino)methylideneamino] imidazole-4-carboxamide isomerase (239 aa).

Asp-9 serves as the catalytic Proton acceptor. The active-site Proton donor is Asp-131.

This sequence belongs to the HisA/HisF family.

It is found in the cytoplasm. It carries out the reaction 1-(5-phospho-beta-D-ribosyl)-5-[(5-phospho-beta-D-ribosylamino)methylideneamino]imidazole-4-carboxamide = 5-[(5-phospho-1-deoxy-D-ribulos-1-ylimino)methylamino]-1-(5-phospho-beta-D-ribosyl)imidazole-4-carboxamide. It participates in amino-acid biosynthesis; L-histidine biosynthesis; L-histidine from 5-phospho-alpha-D-ribose 1-diphosphate: step 4/9. This Bacteroides thetaiotaomicron (strain ATCC 29148 / DSM 2079 / JCM 5827 / CCUG 10774 / NCTC 10582 / VPI-5482 / E50) protein is 1-(5-phosphoribosyl)-5-[(5-phosphoribosylamino)methylideneamino] imidazole-4-carboxamide isomerase.